A 315-amino-acid polypeptide reads, in one-letter code: Methionyl-tRNA formyltransferase (315 aa).

113 to 116 contacts (6S)-5,6,7,8-tetrahydrofolate; that stretch reads SLLP.

The protein belongs to the Fmt family.

The catalysed reaction is L-methionyl-tRNA(fMet) + (6R)-10-formyltetrahydrofolate = N-formyl-L-methionyl-tRNA(fMet) + (6S)-5,6,7,8-tetrahydrofolate + H(+). In terms of biological role, attaches a formyl group to the free amino group of methionyl-tRNA(fMet). The formyl group appears to play a dual role in the initiator identity of N-formylmethionyl-tRNA by promoting its recognition by IF2 and preventing the misappropriation of this tRNA by the elongation apparatus. In Escherichia coli O17:K52:H18 (strain UMN026 / ExPEC), this protein is Methionyl-tRNA formyltransferase.